The following is a 232-amino-acid chain: Early E1A protein (232 aa).

The tract at residues Pro40–Val48 is interaction with RB1 in competition with E2F1. Residues Thr69–Leu84 show a composition bias toward low complexity. A disordered region spans residues Thr69–Thr97. Residues Ser85 to Thr97 show a composition bias toward pro residues. An LXCXE motif, interaction with host RB1 motif is present at residues Leu107–Glu111. A zinc finger spans residues Cys146–Cys164. The interval Ser175–Asn232 is disordered. A PXDLS motif, CTBP-binding motif is present at residues Pro222–Ser226. The short motif at Lys228 to Asn232 is the Nuclear localization signal element.

The protein belongs to the adenoviridae E1A protein family. In terms of assembly, interacts with host UBE2I; this interaction interferes with polySUMOylation. Interacts with host RB1; this interaction induces the aberrant dissociation of RB1-E2F1 complex thereby disrupting the activity of RB1 and activating E2F1-regulated genes. Interacts with host ATF7; the interaction enhances ATF7-mediated viral transactivation activity which requires the zinc binding domains of both proteins. Isoform early E1A 32 kDa protein and isoform early E1A 26 kDa protein interact (via N-terminus) with CUL1 and E3 ubiquitin ligase RBX1; these interactions inhibit RBX1-CUL1-dependent elongation reaction of ubiquitin chains and attenuate ubiquitination of SCF(FBXW7) target proteins. Interacts (via PXLXP motif) with host ZMYND11/BS69 (via MYND-type zinc finger); this interaction inhibits E1A mediated transactivation. Interacts with host EP300; this interaction stimulates the acetylation of RB1 by recruiting EP300 and RB1 into a multimeric-protein complex. Interacts with host CTBP1 and CTBP2; this interaction seems to potentiate viral replication. Interacts with host DCAF7. Interacts with host DYRK1A. Interacts with host KPNA4; this interaction allows E1A import into the host nucleus. Interacts with host EP400; this interaction stabilizes MYC. Interacts with host TBP protein; this interaction probably disrupts the TBP-TATA complex.

The protein resides in the host nucleus. In terms of biological role, plays a role in viral genome replication by driving entry of quiescent cells into the cell cycle. Stimulation of progression from G1 to S phase allows the virus to efficiently use the cellular DNA replicating machinery to achieve viral genome replication. E1A protein has both transforming and trans-activating activities. Induces the disassembly of the E2F1 transcription factor from RB1 by direct competition for the same binding site on RB1, with subsequent transcriptional activation of E2F1-regulated S-phase genes and of the E2 region of the adenoviral genome. Release of E2F1 leads to the ARF-mediated inhibition of MDM2 and causes TP53/p53 to accumulate because it is not targeted for degradation by MDM2-mediated ubiquitination anymore. This increase in TP53, in turn, would arrest the cell proliferation and direct its death but this effect is counteracted by the viral protein E1B-55K. Inactivation of the ability of RB1 to arrest the cell cycle is critical for cellular transformation, uncontrolled cellular growth and proliferation induced by viral infection. Interaction with RBX1 and CUL1 inhibits ubiquitination of the proteins targeted by SCF(FBXW7) ubiquitin ligase complex, and may be linked to unregulated host cell proliferation. The tumorigenesis-restraining activity of E1A may be related to the disruption of the host CtBP-CtIP complex through the CtBP binding motif. In Canine adenovirus serotype 2 (strain Toronto A 26-61) (CAdV-2), this protein is Early E1A protein.